The following is a 321-amino-acid chain: Probable nucleosome assembly protein (321 aa).

The segment covering 272–298 (EENDYDFGEDFEDEEGEDDDEEDDEEE) has biased composition (acidic residues). Positions 272–321 (EENDYDFGEDFEDEEGEDDDEEDDEEEQTIKKPSGKGKAQPQQPQDCKQQ) are disordered. Positions 311-321 (QPQQPQDCKQQ) are enriched in low complexity.

It belongs to the nucleosome assembly protein (NAP) family.

It localises to the nucleus. Functionally, may modulate chromatin structure by regulation of histone octamer formation. The sequence is that of Probable nucleosome assembly protein (nap1) from Dictyostelium discoideum (Social amoeba).